The sequence spans 259 residues: MILVIDVGNTNCTVGVYEKQKLLKHWRMTTDRHRTSDELGMTVLNFFSYANLTPSDIQGIIISSVVPPIMHAMETMCVRYFNIRPLIVGPGIKTGLNLKVDNPREIGSDRIVNAVAASEEYGTPVIVVDFGTATTFCYIDESGVYQGGAIAPGIMISTEALYNRAAKLPRVDIAESNQIIGKSTVASMQAGIFYGFVGQCEGIIAEIKKQSNASPVVVATGGLARMITEKSSAVDILDPFLTLKGLELLYRRNKPTTEK.

6–13 is a binding site for ATP; that stretch reads DVGNTNCT. Substrate is bound at residue 107-110; that stretch reads GSDR. D109 functions as the Proton acceptor in the catalytic mechanism. D129 contacts K(+). Position 132 (T132) interacts with ATP. Position 184 (T184) interacts with substrate.

This sequence belongs to the type III pantothenate kinase family. Homodimer. The cofactor is NH4(+). K(+) serves as cofactor.

Its subcellular location is the cytoplasm. It catalyses the reaction (R)-pantothenate + ATP = (R)-4'-phosphopantothenate + ADP + H(+). It functions in the pathway cofactor biosynthesis; coenzyme A biosynthesis; CoA from (R)-pantothenate: step 1/5. In terms of biological role, catalyzes the phosphorylation of pantothenate (Pan), the first step in CoA biosynthesis. The polypeptide is Type III pantothenate kinase (Listeria monocytogenes serotype 4b (strain CLIP80459)).